Consider the following 89-residue polypeptide: Cell division topological specificity factor (89 aa).

Belongs to the MinE family.

Prevents the cell division inhibition by proteins MinC and MinD at internal division sites while permitting inhibition at polar sites. This ensures cell division at the proper site by restricting the formation of a division septum at the midpoint of the long axis of the cell. The sequence is that of Cell division topological specificity factor from Edwardsiella ictaluri (strain 93-146).